Here is a 529-residue protein sequence, read N- to C-terminus: Bifunctional purine biosynthesis protein PurH (529 aa).

The 148-residue stretch at 1 to 148 (MQQHRPVRRA…KNHKDVAIVV (148 aa)) folds into the MGS-like domain.

Belongs to the PurH family.

The enzyme catalyses (6R)-10-formyltetrahydrofolate + 5-amino-1-(5-phospho-beta-D-ribosyl)imidazole-4-carboxamide = 5-formamido-1-(5-phospho-D-ribosyl)imidazole-4-carboxamide + (6S)-5,6,7,8-tetrahydrofolate. It catalyses the reaction IMP + H2O = 5-formamido-1-(5-phospho-D-ribosyl)imidazole-4-carboxamide. It participates in purine metabolism; IMP biosynthesis via de novo pathway; 5-formamido-1-(5-phospho-D-ribosyl)imidazole-4-carboxamide from 5-amino-1-(5-phospho-D-ribosyl)imidazole-4-carboxamide (10-formyl THF route): step 1/1. The protein operates within purine metabolism; IMP biosynthesis via de novo pathway; IMP from 5-formamido-1-(5-phospho-D-ribosyl)imidazole-4-carboxamide: step 1/1. This Erwinia tasmaniensis (strain DSM 17950 / CFBP 7177 / CIP 109463 / NCPPB 4357 / Et1/99) protein is Bifunctional purine biosynthesis protein PurH.